Consider the following 533-residue polypeptide: UDP-glucuronosyltransferase 1-2 (533 aa).

Residues 1-27 (MDTGLCVPLRGISGLLLLLCALPWAEG) form the signal peptide. Asn-141, Asn-295, and Asn-433 each carry an N-linked (GlcNAc...) asparagine glycan. Residues 491–511 (VIGFLLAIVLTVVFIVFKCCA) traverse the membrane as a helical segment.

This sequence belongs to the UDP-glycosyltransferase family. In terms of tissue distribution, expressed in kidney.

It localises to the microsome. The protein localises to the endoplasmic reticulum membrane. It catalyses the reaction glucuronate acceptor + UDP-alpha-D-glucuronate = acceptor beta-D-glucuronoside + UDP + H(+). Its function is as follows. UDPGT is of major importance in the conjugation and subsequent elimination of potentially toxic xenobiotics and endogenous compounds. In Mus musculus (Mouse), this protein is UDP-glucuronosyltransferase 1-2 (Ugt1a2).